Consider the following 427-residue polypeptide: Glutamate-1-semialdehyde 2,1-aminomutase (427 aa).

The residue at position 265 (Lys-265) is an N6-(pyridoxal phosphate)lysine.

This sequence belongs to the class-III pyridoxal-phosphate-dependent aminotransferase family. HemL subfamily. Homodimer. Pyridoxal 5'-phosphate is required as a cofactor.

It localises to the cytoplasm. It carries out the reaction (S)-4-amino-5-oxopentanoate = 5-aminolevulinate. Its pathway is porphyrin-containing compound metabolism; protoporphyrin-IX biosynthesis; 5-aminolevulinate from L-glutamyl-tRNA(Glu): step 2/2. In Pseudomonas putida (strain ATCC 700007 / DSM 6899 / JCM 31910 / BCRC 17059 / LMG 24140 / F1), this protein is Glutamate-1-semialdehyde 2,1-aminomutase.